The following is a 616-amino-acid chain: Dihydroxy-acid dehydratase (616 aa).

Residue Asp81 coordinates Mg(2+). [2Fe-2S] cluster is bound at residue Cys122. Mg(2+) contacts are provided by Asp123 and Lys124. Position 124 is an N6-carboxylysine (Lys124). Cys195 is a [2Fe-2S] cluster binding site. Residue Glu491 coordinates Mg(2+). Residue Ser517 is the Proton acceptor of the active site.

The protein belongs to the IlvD/Edd family. As to quaternary structure, homodimer. It depends on [2Fe-2S] cluster as a cofactor. Mg(2+) serves as cofactor.

It catalyses the reaction (2R)-2,3-dihydroxy-3-methylbutanoate = 3-methyl-2-oxobutanoate + H2O. The enzyme catalyses (2R,3R)-2,3-dihydroxy-3-methylpentanoate = (S)-3-methyl-2-oxopentanoate + H2O. It participates in amino-acid biosynthesis; L-isoleucine biosynthesis; L-isoleucine from 2-oxobutanoate: step 3/4. Its pathway is amino-acid biosynthesis; L-valine biosynthesis; L-valine from pyruvate: step 3/4. In terms of biological role, functions in the biosynthesis of branched-chain amino acids. Catalyzes the dehydration of (2R,3R)-2,3-dihydroxy-3-methylpentanoate (2,3-dihydroxy-3-methylvalerate) into 2-oxo-3-methylpentanoate (2-oxo-3-methylvalerate) and of (2R)-2,3-dihydroxy-3-methylbutanoate (2,3-dihydroxyisovalerate) into 2-oxo-3-methylbutanoate (2-oxoisovalerate), the penultimate precursor to L-isoleucine and L-valine, respectively. The protein is Dihydroxy-acid dehydratase of Escherichia coli O8 (strain IAI1).